The sequence spans 124 residues: uncharacterized protein (124 aa).

This is an uncharacterized protein from Magallana gigas (Pacific oyster).